The sequence spans 432 residues: Amino-acid acetyltransferase (432 aa).

Residues 286 to 425 (EVVREASIED…ASLYNYQRNS (140 aa)) enclose the N-acetyltransferase domain.

Belongs to the acetyltransferase family. ArgA subfamily.

It is found in the cytoplasm. The catalysed reaction is L-glutamate + acetyl-CoA = N-acetyl-L-glutamate + CoA + H(+). It participates in amino-acid biosynthesis; L-arginine biosynthesis; N(2)-acetyl-L-ornithine from L-glutamate: step 1/4. In Pseudomonas putida (strain GB-1), this protein is Amino-acid acetyltransferase.